Consider the following 77-residue polypeptide: Sec-independent protein translocase protein TatA (77 aa).

Residues 1–21 traverse the membrane as a helical segment; that stretch reads MGSFSIWHWLVVLAIVVLVFG. A disordered region spans residues 40–77; sequence KEGMKGAEEENTQPPPSHQQVTGHSIKSEIEEKDQTKV. A compositionally biased stretch (basic and acidic residues) spans 65–77; it reads IKSEIEEKDQTKV.

It belongs to the TatA/E family. As to quaternary structure, the Tat system comprises two distinct complexes: a TatABC complex, containing multiple copies of TatA, TatB and TatC subunits, and a separate TatA complex, containing only TatA subunits. Substrates initially bind to the TatABC complex, which probably triggers association of the separate TatA complex to form the active translocon.

Its subcellular location is the cell inner membrane. In terms of biological role, part of the twin-arginine translocation (Tat) system that transports large folded proteins containing a characteristic twin-arginine motif in their signal peptide across membranes. TatA could form the protein-conducting channel of the Tat system. The protein is Sec-independent protein translocase protein TatA of Nitrosomonas eutropha (strain DSM 101675 / C91 / Nm57).